Here is a 561-residue protein sequence, read N- to C-terminus: Probable xyloglucan galactosyltransferase GT20 (561 aa).

Residues 1-31 lie on the Cytoplasmic side of the membrane; sequence MVSKRKSRTSKTIEDSCIHLCSVFFRFLYYT. The chain crosses the membrane as a helical; Signal-anchor for type II membrane protein span at residues 32-52; it reads LPALFLFFFLLYLCLSFTTGI. At 53 to 561 the chain is on the lumenal side; it reads SYNNFHMCIF…LLKKINRSVV (509 aa). N-linked (GlcNAc...) asparagine glycosylation is found at Asn-87, Asn-253, Asn-277, Asn-418, Asn-421, and Asn-557.

The protein belongs to the glycosyltransferase 47 family. As to expression, expressed in hydathodes.

It localises to the golgi apparatus membrane. Functions in xyloglucan synthesis by adding side chains to the xylosylated glucan backbone. Involved in the galactosylation of hemicellulose xyloglucan. The chain is Probable xyloglucan galactosyltransferase GT20 from Arabidopsis thaliana (Mouse-ear cress).